We begin with the raw amino-acid sequence, 172 residues long: Folate transporter FolT (172 aa).

5 helical membrane-spanning segments follow: residues 6–26 (VMIY…FLSI), 35–55 (FGFI…AGIV), 71–91 (AYFP…GVFF), 101–121 (VLLA…TIWL), and 131–151 (VLFV…AIVI).

In terms of assembly, forms a stable energy-coupling factor (ECF) transporter complex composed of a membrane-embedded substrate-binding protein (S component), two ATP-binding proteins (A components) and a transmembrane protein (T component).

It localises to the cell membrane. Folate-binding protein that interacts with the energy-coupling factor (ECF) ABC-transporter complex. Unlike classic ABC transporters this ECF transporter provides the energy necessary to transport a number of different substrates. The substrates themselves are bound by transmembrane, not extracytoplasmic soluble proteins. The chain is Folate transporter FolT (folT) from Clostridium novyi (strain NT).